Reading from the N-terminus, the 343-residue chain is MLKTIALDAMGGDNGPKVIVPAALSILKKHPKVKLILVGKEDQLALLIPEKNRKSFGQRLEIIHASEEVGMDEPPSQALRTKKNSSMRVAINLVKEGQAHACVSAGNTGALMATARYVLKTLPGIDRPAIIAAFPTKNEREVRVLDLGANVDSTPENLYQFAVMGSILSSAAHNIRNPRIGLLNVGEEEIKGNELVKKANELFETRKTINYIGYVEGNTIFNNIADVVVCDGFVGNAVLKASEGVAQLIKQHAKEAFSEAWWTKLALLPAIPILKRLIRRVDPERYNGATFLGLNGIVVKSHGSANIKAFVCAVEEAIFQVDKNIPQLIKEEVAHILKEFENK.

This sequence belongs to the PlsX family. As to quaternary structure, homodimer. Probably interacts with PlsY.

It localises to the cytoplasm. It carries out the reaction a fatty acyl-[ACP] + phosphate = an acyl phosphate + holo-[ACP]. It participates in lipid metabolism; phospholipid metabolism. Catalyzes the reversible formation of acyl-phosphate (acyl-PO(4)) from acyl-[acyl-carrier-protein] (acyl-ACP). This enzyme utilizes acyl-ACP as fatty acyl donor, but not acyl-CoA. This chain is Phosphate acyltransferase, found in Coxiella burnetii (strain RSA 331 / Henzerling II).